The sequence spans 299 residues: MPT51/MPB51 antigen (299 aa).

The N-terminal stretch at Met1–Ala26 is a signal peptide.

This sequence belongs to the mycobacterial A85 antigen family. In terms of assembly, homodimer.

Its subcellular location is the secreted. May have a role in host tissue attachment, whereby ligands may include the serum protein fibronectin and small sugars. This chain is MPT51/MPB51 antigen (mpt51), found in Mycobacterium bovis (strain ATCC BAA-935 / AF2122/97).